The following is a 378-amino-acid chain: Copper-containing nitrite reductase (378 aa).

The segment at residues 1–38 (MTEQLQMTRRTMLAGAALAGAVAPLLHTAQAHAAGAAA) is a signal peptide (tat-type signal). Plastocyanin-like domains are found at residues 39–213 (AAGA…YDKI) and 214–378 (YYVG…PASM). Cu cation-binding residues include His133, His138, His173, Cys174, His183, Met188, and His344.

This sequence belongs to the multicopper oxidase family. As to quaternary structure, homotrimer. The cofactor is Cu(+). It depends on Cu(2+) as a cofactor. FAD serves as cofactor. Predicted to be exported by the Tat system. The position of the signal peptide cleavage has been experimentally proven.

The protein localises to the periplasm. The enzyme catalyses nitric oxide + Fe(III)-[cytochrome c] + H2O = Fe(II)-[cytochrome c] + nitrite + 2 H(+). It functions in the pathway nitrogen metabolism; nitrate reduction (denitrification); dinitrogen from nitrate: step 2/4. This is Copper-containing nitrite reductase (nirK) from Achromobacter cycloclastes.